Consider the following 919-residue polypeptide: Probable dipeptidyl-aminopeptidase B (919 aa).

Residues 1 to 89 (MGANSRVNDD…DGYVPSGGKP (89 aa)) are disordered. Residues 1–95 (MGANSRVNDD…GGKPAQRRTR (95 aa)) are Cytoplasmic-facing. Residues 27–38 (DSSSTASISLTL) show a composition bias toward low complexity. The span at 44–55 (HTATEPSKSTNG) shows a compositional bias: polar residues. Residues 96–116 (IVFWLLVALCVGGWAMAFIIM) form a helical; Signal-anchor for type II membrane protein membrane-spanning segment. Topologically, residues 117-919 (ATSPNNRHST…RVIRRLLHFG (803 aa)) are vacuolar. The disordered stretch occupies residues 121-150 (NNRHSTSDSSSGGSESEIVKPNTPHDGKKI). The span at 127–136 (SDSSSGGSES) shows a compositional bias: low complexity. N-linked (GlcNAc...) asparagine glycans are attached at residues asparagine 207, asparagine 303, asparagine 355, asparagine 577, and asparagine 665. Serine 760 functions as the Charge relay system in the catalytic mechanism. 2 N-linked (GlcNAc...) asparagine glycosylation sites follow: asparagine 814 and asparagine 819. Catalysis depends on charge relay system residues aspartate 837 and histidine 870.

Belongs to the peptidase S9B family.

Its subcellular location is the vacuole membrane. The catalysed reaction is Release of an N-terminal dipeptide, Xaa-Yaa-|-Zaa-, from a polypeptide, preferentially when Yaa is Pro, provided Zaa is neither Pro nor hydroxyproline.. Functionally, type IV dipeptidyl-peptidase which removes N-terminal dipeptides sequentially from polypeptides having unsubstituted N-termini provided that the penultimate residue is proline. The sequence is that of Probable dipeptidyl-aminopeptidase B (DAPB) from Arthroderma otae (strain ATCC MYA-4605 / CBS 113480) (Microsporum canis).